Consider the following 180-residue polypeptide: Large ribosomal subunit protein uL5 (180 aa).

This sequence belongs to the universal ribosomal protein uL5 family. In terms of assembly, part of the 50S ribosomal subunit; part of the 5S rRNA/L5/L18/L25 subcomplex. Contacts the 5S rRNA and the P site tRNA. Forms a bridge to the 30S subunit in the 70S ribosome.

In terms of biological role, this is one of the proteins that bind and probably mediate the attachment of the 5S RNA into the large ribosomal subunit, where it forms part of the central protuberance. In the 70S ribosome it contacts protein S13 of the 30S subunit (bridge B1b), connecting the 2 subunits; this bridge is implicated in subunit movement. Contacts the P site tRNA; the 5S rRNA and some of its associated proteins might help stabilize positioning of ribosome-bound tRNAs. This is Large ribosomal subunit protein uL5 from Chlamydia pneumoniae (Chlamydophila pneumoniae).